We begin with the raw amino-acid sequence, 335 residues long: Holliday junction branch migration complex subunit RuvB (335 aa).

Residues 1-183 form a large ATPase domain (RuvB-L) region; sequence MDERIISSET…FGVIDHLEFY (183 aa). Residues Leu-22, Arg-23, Gly-64, Lys-67, Thr-68, Thr-69, 130 to 132, Arg-173, Tyr-183, and Arg-220 each bind ATP; that span reads EDY. Thr-68 lines the Mg(2+) pocket. Positions 184–254 are small ATPAse domain (RuvB-S); sequence TEEQLTEIVL…LAKEALTLLQ (71 aa). The head domain (RuvB-H) stretch occupies residues 257–335; sequence PRGLDTIDQK…HLGISYEKEV (79 aa). DNA is bound by residues Arg-293, Arg-312, and Arg-317.

The protein belongs to the RuvB family. As to quaternary structure, homohexamer. Forms an RuvA(8)-RuvB(12)-Holliday junction (HJ) complex. HJ DNA is sandwiched between 2 RuvA tetramers; dsDNA enters through RuvA and exits via RuvB. An RuvB hexamer assembles on each DNA strand where it exits the tetramer. Each RuvB hexamer is contacted by two RuvA subunits (via domain III) on 2 adjacent RuvB subunits; this complex drives branch migration. In the full resolvosome a probable DNA-RuvA(4)-RuvB(12)-RuvC(2) complex forms which resolves the HJ.

It localises to the cytoplasm. It catalyses the reaction ATP + H2O = ADP + phosphate + H(+). The RuvA-RuvB-RuvC complex processes Holliday junction (HJ) DNA during genetic recombination and DNA repair, while the RuvA-RuvB complex plays an important role in the rescue of blocked DNA replication forks via replication fork reversal (RFR). RuvA specifically binds to HJ cruciform DNA, conferring on it an open structure. The RuvB hexamer acts as an ATP-dependent pump, pulling dsDNA into and through the RuvAB complex. RuvB forms 2 homohexamers on either side of HJ DNA bound by 1 or 2 RuvA tetramers; 4 subunits per hexamer contact DNA at a time. Coordinated motions by a converter formed by DNA-disengaged RuvB subunits stimulates ATP hydrolysis and nucleotide exchange. Immobilization of the converter enables RuvB to convert the ATP-contained energy into a lever motion, pulling 2 nucleotides of DNA out of the RuvA tetramer per ATP hydrolyzed, thus driving DNA branch migration. The RuvB motors rotate together with the DNA substrate, which together with the progressing nucleotide cycle form the mechanistic basis for DNA recombination by continuous HJ branch migration. Branch migration allows RuvC to scan DNA until it finds its consensus sequence, where it cleaves and resolves cruciform DNA. The sequence is that of Holliday junction branch migration complex subunit RuvB from Listeria monocytogenes serovar 1/2a (strain ATCC BAA-679 / EGD-e).